A 294-amino-acid chain; its full sequence is MFPSPVTTTPFSVKDILNLEQQQQGGLAPMELSSPSCMLATFKQEAFGSEPPALPELPEPPPAKPPAAFPGPYYVKSYGEMDTAKDSKADKKELCALHKSLEQEKRELEDPERPRQRKRRKPRVLFSQAQVYELERRFKQQKYLSAPERDHLANVLKLTSTQVKIWFQNRRYKCKRQRQDQTLEMVGIPPPRRIAVPVLVRDGKPCLGESSPYSSPYNVSINPYSYNAYPAYPNYNSPACNANYNCSYPAVQPVQPSAAGNNFMNFSVGDLNSVQPPIPQGNAGISTLHGIRAW.

2 disordered regions span residues Gly-48 to Phe-69 and Glu-102 to Pro-122. Residues Pro-52–Phe-69 are compositionally biased toward pro residues. The segment covering Glu-102–Pro-114 has biased composition (basic and acidic residues). Residues Arg-119–Arg-178 constitute a DNA-binding region (homeobox).

It belongs to the NK-2 homeobox family. Homodimer (via the homeobox); binds DNA as homodimer.

The protein localises to the nucleus. Functionally, transcription factor required for the development of the heart and the spleen. Implicated in commitment to and/or differentiation of the myocardial lineage. Binds to the core DNA motif of promoter. The chain is Homeobox protein Nkx-2.5 (NKX-2.5) from Gallus gallus (Chicken).